A 337-amino-acid polypeptide reads, in one-letter code: Ferrochelatase (337 aa).

The Fe cation site is built by His189 and Glu293.

This sequence belongs to the ferrochelatase family.

It localises to the cytoplasm. The catalysed reaction is heme b + 2 H(+) = protoporphyrin IX + Fe(2+). It functions in the pathway porphyrin-containing compound metabolism; protoheme biosynthesis; protoheme from protoporphyrin-IX: step 1/1. Functionally, catalyzes the ferrous insertion into protoporphyrin IX. In Pseudomonas entomophila (strain L48), this protein is Ferrochelatase.